The chain runs to 461 residues: MQKNEIKQIDMKPLIIDSSWTERFLPDPPREKDNRPPFRRDRGRILHSAAFRCLQAKTQIHSIGENDFYRTRLTHSLEVAQIGSSLVAQLKFLETFESLSQTLNIDKNELQKQLKPLLPSNDLIESLCFAHDIGHPPFGHGGETALNYMMAEQGGFEGNAQTFRILTKLEPYTENAGMNLTRRTLLGVVKYPALLDVASPQYAELNFSRNIDARFVRIHDWIPGKGIFRDDLKMFNWLLENLSENDRTLFCQFKKVRENPAESLHTRFKSLDCSIMELADDIAYGVHDLEDAIVTGMVNPHQWQAAHSALKQIPSAWLHENIDSISQRLFSDKHFERKQAIGALVNFFITNVRWKLTANFDEPLLRYNAELSPEVIVALGVFKKFVWDYVIRNVDTQRIEYKGQRMLTEMFQIFESDPERLLPRNTANRWRNAPEERKKRIICDYIAGMSDAHALRVYQQL.

A disordered region spans residues 22–41 (ERFLPDPPREKDNRPPFRRD). Over residues 24–41 (FLPDPPREKDNRPPFRRD) the composition is skewed to basic and acidic residues. An HD domain is found at 72-285 (RLTHSLEVAQ…MELADDIAYG (214 aa)).

The protein belongs to the dGTPase family. Type 2 subfamily.

This chain is Deoxyguanosinetriphosphate triphosphohydrolase-like protein, found in Haemophilus influenzae (strain PittGG).